Here is a 51-residue protein sequence, read N- to C-terminus: Defensin-like protein 2A (51 aa).

Q1 carries the post-translational modification Pyrrolidone carboxylic acid. Cystine bridges form between C4–C51, C15–C36, C21–C45, and C25–C47. S8 carries the phosphoserine; by CPK modification.

In terms of assembly, forms oligomers in its native state.

Its function is as follows. Possesses antifungal activity sensitive to inorganic cations. This Sinapis alba (White mustard) protein is Defensin-like protein 2A.